The sequence spans 271 residues: Type III pantothenate kinase (271 aa).

6–13 (DVRNTNIV) contributes to the ATP binding site. 109–112 (GADR) contacts substrate. D111 (proton acceptor) is an active-site residue. D131 provides a ligand contact to K(+). T134 is an ATP binding site. T186 lines the substrate pocket.

It belongs to the type III pantothenate kinase family. In terms of assembly, homodimer. Requires NH4(+) as cofactor. It depends on K(+) as a cofactor.

It is found in the cytoplasm. It carries out the reaction (R)-pantothenate + ATP = (R)-4'-phosphopantothenate + ADP + H(+). Its pathway is cofactor biosynthesis; coenzyme A biosynthesis; CoA from (R)-pantothenate: step 1/5. Catalyzes the phosphorylation of pantothenate (Pan), the first step in CoA biosynthesis. This chain is Type III pantothenate kinase, found in Rhodococcus opacus (strain B4).